The primary structure comprises 474 residues: 3-isopropylmalate dehydratase large subunit (474 aa).

C350, C415, and C418 together coordinate [4Fe-4S] cluster.

Belongs to the aconitase/IPM isomerase family. LeuC type 1 subfamily. In terms of assembly, heterodimer of LeuC and LeuD. It depends on [4Fe-4S] cluster as a cofactor.

The catalysed reaction is (2R,3S)-3-isopropylmalate = (2S)-2-isopropylmalate. It participates in amino-acid biosynthesis; L-leucine biosynthesis; L-leucine from 3-methyl-2-oxobutanoate: step 2/4. Catalyzes the isomerization between 2-isopropylmalate and 3-isopropylmalate, via the formation of 2-isopropylmaleate. The sequence is that of 3-isopropylmalate dehydratase large subunit from Phenylobacterium zucineum (strain HLK1).